We begin with the raw amino-acid sequence, 327 residues long: Phenylalanine--tRNA ligase alpha subunit (327 aa).

E252 contributes to the Mg(2+) binding site.

It belongs to the class-II aminoacyl-tRNA synthetase family. Phe-tRNA synthetase alpha subunit type 1 subfamily. In terms of assembly, tetramer of two alpha and two beta subunits. It depends on Mg(2+) as a cofactor.

It localises to the cytoplasm. The enzyme catalyses tRNA(Phe) + L-phenylalanine + ATP = L-phenylalanyl-tRNA(Phe) + AMP + diphosphate + H(+). The sequence is that of Phenylalanine--tRNA ligase alpha subunit from Escherichia coli O139:H28 (strain E24377A / ETEC).